A 504-amino-acid polypeptide reads, in one-letter code: Probable cytosol aminopeptidase (504 aa).

Mn(2+) is bound by residues Lys272 and Asp277. Lys284 is an active-site residue. Mn(2+) contacts are provided by Asp295, Asp354, and Glu356. Arg358 is a catalytic residue.

Belongs to the peptidase M17 family. Mn(2+) serves as cofactor.

Its subcellular location is the cytoplasm. It catalyses the reaction Release of an N-terminal amino acid, Xaa-|-Yaa-, in which Xaa is preferably Leu, but may be other amino acids including Pro although not Arg or Lys, and Yaa may be Pro. Amino acid amides and methyl esters are also readily hydrolyzed, but rates on arylamides are exceedingly low.. The catalysed reaction is Release of an N-terminal amino acid, preferentially leucine, but not glutamic or aspartic acids.. In terms of biological role, presumably involved in the processing and regular turnover of intracellular proteins. Catalyzes the removal of unsubstituted N-terminal amino acids from various peptides. In Chlorobaculum tepidum (strain ATCC 49652 / DSM 12025 / NBRC 103806 / TLS) (Chlorobium tepidum), this protein is Probable cytosol aminopeptidase.